The sequence spans 318 residues: Quinolinate synthase (318 aa).

The iminosuccinate site is built by His-34 and Ser-51. Cys-96 lines the [4Fe-4S] cluster pocket. Iminosuccinate-binding positions include 122 to 124 (YIN) and Ser-139. Residue Cys-182 coordinates [4Fe-4S] cluster. Residues 208–210 (HPE) and Thr-225 contribute to the iminosuccinate site. Residue Cys-275 participates in [4Fe-4S] cluster binding.

Belongs to the quinolinate synthase family. Type 2 subfamily. It depends on [4Fe-4S] cluster as a cofactor.

The protein resides in the cytoplasm. It carries out the reaction iminosuccinate + dihydroxyacetone phosphate = quinolinate + phosphate + 2 H2O + H(+). The protein operates within cofactor biosynthesis; NAD(+) biosynthesis; quinolinate from iminoaspartate: step 1/1. Catalyzes the condensation of iminoaspartate with dihydroxyacetone phosphate to form quinolinate. This chain is Quinolinate synthase, found in Synechocystis sp. (strain ATCC 27184 / PCC 6803 / Kazusa).